Here is a 2280-residue protein sequence, read N- to C-terminus: Protein Ycf2 (2280 aa).

1634-1641 (GSIGTGRS) is an ATP binding site.

Belongs to the Ycf2 family.

Its subcellular location is the plastid. The protein localises to the chloroplast stroma. Probable ATPase of unknown function. Its presence in a non-photosynthetic plant (Epifagus virginiana) and experiments in tobacco indicate that it has an essential function which is probably not related to photosynthesis. The sequence is that of Protein Ycf2 from Eucalyptus globulus subsp. globulus (Tasmanian blue gum).